The chain runs to 548 residues: Chaperonin GroEL (548 aa).

ATP contacts are provided by residues 30 to 33 (TLGP), K51, 87 to 91 (DGTTT), G415, 479 to 481 (NAA), and D495. Residues 525-548 (PKEDKTSDASSSPAGGMGGMGGMM) form a disordered region. A compositionally biased stretch (gly residues) spans 539-548 (GGMGGMGGMM).

Belongs to the chaperonin (HSP60) family. In terms of assembly, forms a cylinder of 14 subunits composed of two heptameric rings stacked back-to-back. Interacts with the co-chaperonin GroES.

Its subcellular location is the cytoplasm. The enzyme catalyses ATP + H2O + a folded polypeptide = ADP + phosphate + an unfolded polypeptide.. In terms of biological role, together with its co-chaperonin GroES, plays an essential role in assisting protein folding. The GroEL-GroES system forms a nano-cage that allows encapsulation of the non-native substrate proteins and provides a physical environment optimized to promote and accelerate protein folding. This chain is Chaperonin GroEL, found in Buchnera aphidicola subsp. Rhopalosiphum maidis.